The chain runs to 210 residues: Protein HEADING DATE REPRESSOR 1 (210 aa).

The interval 1-97 is disordered; sequence MEEPASADPP…GKRSSAEMLL (97 aa). A coiled-coil region spans residues 29-49; that stretch reads QQELNKEAADEQLNNQAHEEA. Composition is skewed to basic and acidic residues over residues 45–54 and 62–79; these read AHEEAMKIDD and DDVH…RKAL. A coiled-coil region spans residues 129 to 184; that stretch reads RRIAIQEMNRKDREINGLNEQLEEDSRVLELLQKQLADERKKRTEIEKENSMLHEQ.

As to quaternary structure, interacts with OSK3 and OSK4. In terms of tissue distribution, mostly expressed in leaves, seedlings and floral organs, and, to a lower extent, in panicle, roots, nodes, internodes, leaf joint and sheath.

The protein localises to the nucleus. Regulates flowering time via a photoperiod-dependent pathway. Suppressor of flowering that upregulates HD1 and down-regulates EHD1 in long days (LD), thus leading to the down-regulation of HD3A and RFT1. Triggers OSK4-mediated HD1 phosphorylation. This is Protein HEADING DATE REPRESSOR 1 from Oryza sativa subsp. japonica (Rice).